An 85-amino-acid chain; its full sequence is Alpha-toxin BmalphaTx47 (85 aa).

An N-terminal signal peptide occupies residues 1–19; it reads MNYLIVISFALLLMTGVQS. The LCN-type CS-alpha/beta domain occupies 21 to 83; that stretch reads RDAYIADSEN…VPIRISGSCR (63 aa). 4 disulfide bridges follow: Cys-31–Cys-82, Cys-35–Cys-55, Cys-41–Cys-65, and Cys-45–Cys-67.

This sequence belongs to the long (4 C-C) scorpion toxin superfamily. Sodium channel inhibitor family. Alpha subfamily. As to expression, expressed by the venom gland.

The protein resides in the secreted. Functionally, alpha toxins bind voltage-independently at site-3 of sodium channels (Nav) and inhibit the inactivation of the activated channels, thereby blocking neuronal transmission. This toxin expressed with the pET-14b vector has low inhibitory activity on sodium channels (11.33% on rNav1.2/SCN2A, 15.96% on mNav1.4/SCN4A and 5.04% on hNav1.5/SCN5A). When expressed with the pET-28a vector, this toxin has higher inhibitory activities (44.12% on rNav1.2/SCN2A, 25.40% on mNav1.4/SCN4A and 65.34% on hNav1.5/SCN5A). The protein is Alpha-toxin BmalphaTx47 of Olivierus martensii (Manchurian scorpion).